We begin with the raw amino-acid sequence, 134 residues long: Ribosome-binding factor A (134 aa).

It belongs to the RbfA family. Monomer. Binds 30S ribosomal subunits, but not 50S ribosomal subunits or 70S ribosomes.

It localises to the cytoplasm. One of several proteins that assist in the late maturation steps of the functional core of the 30S ribosomal subunit. Associates with free 30S ribosomal subunits (but not with 30S subunits that are part of 70S ribosomes or polysomes). Required for efficient processing of 16S rRNA. May interact with the 5'-terminal helix region of 16S rRNA. This is Ribosome-binding factor A from Tolumonas auensis (strain DSM 9187 / NBRC 110442 / TA 4).